Consider the following 273-residue polypeptide: Serine acetyltransferase (273 aa).

It belongs to the transferase hexapeptide repeat family. Part of the cysteine synthase complex formed at a ratio of 1 copy of this protein and 2 copies of O-acetylserine sulfhydrylase (cysK). The complex reversibly dissociates in the presence of O-acetyl-L-serine in the absence of hydrogen sulfide.

It is found in the cytoplasm. It carries out the reaction L-serine + acetyl-CoA = O-acetyl-L-serine + CoA. The protein operates within amino-acid biosynthesis; L-cysteine biosynthesis; L-cysteine from L-serine: step 1/2. Its activity is regulated as follows. Sensitive to feedback inhibition by L-cysteine. The chain is Serine acetyltransferase (cysE) from Salmonella typhimurium (strain LT2 / SGSC1412 / ATCC 700720).